The chain runs to 513 residues: cAMP-regulated M3R protein (513 aa).

It to D.discoideum protein M3L.

In Dictyostelium discoideum (Social amoeba), this protein is cAMP-regulated M3R protein (prtB).